Here is a 673-residue protein sequence, read N- to C-terminus: DNA ligase (673 aa).

NAD(+) is bound by residues 33 to 37 (DYEYD), 82 to 83 (SL), and glutamate 113. Catalysis depends on lysine 115, which acts as the N6-AMP-lysine intermediate. The NAD(+) site is built by arginine 136, glutamate 170, lysine 285, and lysine 309. Cysteine 403, cysteine 406, cysteine 421, and cysteine 426 together coordinate Zn(2+). One can recognise a BRCT domain in the interval 583–672 (AKSDILKGYT…SHEEVEKILM (90 aa)).

The protein belongs to the NAD-dependent DNA ligase family. LigA subfamily. Mg(2+) is required as a cofactor. Requires Mn(2+) as cofactor.

The catalysed reaction is NAD(+) + (deoxyribonucleotide)n-3'-hydroxyl + 5'-phospho-(deoxyribonucleotide)m = (deoxyribonucleotide)n+m + AMP + beta-nicotinamide D-nucleotide.. Its function is as follows. DNA ligase that catalyzes the formation of phosphodiester linkages between 5'-phosphoryl and 3'-hydroxyl groups in double-stranded DNA using NAD as a coenzyme and as the energy source for the reaction. It is essential for DNA replication and repair of damaged DNA. The chain is DNA ligase from Caldicellulosiruptor saccharolyticus (strain ATCC 43494 / DSM 8903 / Tp8T 6331).